The chain runs to 418 residues: Glutamyl-tRNA reductase (418 aa).

Substrate is bound by residues Thr49–Arg52, Ser109, Glu114–Gln116, and Gln120. Cys50 (nucleophile) is an active-site residue. Residue Gly189–Ile194 participates in NADP(+) binding.

The protein belongs to the glutamyl-tRNA reductase family. In terms of assembly, homodimer.

It catalyses the reaction (S)-4-amino-5-oxopentanoate + tRNA(Glu) + NADP(+) = L-glutamyl-tRNA(Glu) + NADPH + H(+). Its pathway is porphyrin-containing compound metabolism; protoporphyrin-IX biosynthesis; 5-aminolevulinate from L-glutamyl-tRNA(Glu): step 1/2. Catalyzes the NADPH-dependent reduction of glutamyl-tRNA(Glu) to glutamate 1-semialdehyde (GSA). The sequence is that of Glutamyl-tRNA reductase from Erwinia tasmaniensis (strain DSM 17950 / CFBP 7177 / CIP 109463 / NCPPB 4357 / Et1/99).